Consider the following 196-residue polypeptide: Small ribosomal subunit protein uS4c (196 aa).

Positions 17-36 are disordered; that stretch reads ALPGLTRKTPKSGSNLKKKF. Positions 89-169 constitute an S4 RNA-binding domain; the sequence is MRLDNILFRL…LPKHLTIDTL (81 aa).

It belongs to the universal ribosomal protein uS4 family. Part of the 30S ribosomal subunit. Contacts protein S5. The interaction surface between S4 and S5 is involved in control of translational fidelity.

Its subcellular location is the plastid. The protein resides in the chloroplast. In terms of biological role, one of the primary rRNA binding proteins, it binds directly to 16S rRNA where it nucleates assembly of the body of the 30S subunit. Its function is as follows. With S5 and S12 plays an important role in translational accuracy. In Festuca gigantea (Giant fescue), this protein is Small ribosomal subunit protein uS4c (rps4).